A 204-amino-acid polypeptide reads, in one-letter code: Urease accessory protein UreG (204 aa).

11–18 (GPVGAGKT) lines the GTP pocket.

This sequence belongs to the SIMIBI class G3E GTPase family. UreG subfamily. Homodimer. UreD, UreF and UreG form a complex that acts as a GTP-hydrolysis-dependent molecular chaperone, activating the urease apoprotein by helping to assemble the nickel containing metallocenter of UreC. The UreE protein probably delivers the nickel.

Its subcellular location is the cytoplasm. Its function is as follows. Facilitates the functional incorporation of the urease nickel metallocenter. This process requires GTP hydrolysis, probably effectuated by UreG. The sequence is that of Urease accessory protein UreG from Staphylococcus epidermidis (strain ATCC 35984 / DSM 28319 / BCRC 17069 / CCUG 31568 / BM 3577 / RP62A).